The following is a 120-amino-acid chain: NAD(P)H-quinone oxidoreductase subunit 3, chloroplastic (120 aa).

3 helical membrane-spanning segments follow: residues I9 to G29, M64 to M84, and V88 to S108.

This sequence belongs to the complex I subunit 3 family. NDH is composed of at least 16 different subunits, 5 of which are encoded in the nucleus.

Its subcellular location is the plastid. It localises to the chloroplast thylakoid membrane. It catalyses the reaction a plastoquinone + NADH + (n+1) H(+)(in) = a plastoquinol + NAD(+) + n H(+)(out). The catalysed reaction is a plastoquinone + NADPH + (n+1) H(+)(in) = a plastoquinol + NADP(+) + n H(+)(out). Functionally, NDH shuttles electrons from NAD(P)H:plastoquinone, via FMN and iron-sulfur (Fe-S) centers, to quinones in the photosynthetic chain and possibly in a chloroplast respiratory chain. The immediate electron acceptor for the enzyme in this species is believed to be plastoquinone. Couples the redox reaction to proton translocation, and thus conserves the redox energy in a proton gradient. The protein is NAD(P)H-quinone oxidoreductase subunit 3, chloroplastic of Lemna minor (Common duckweed).